Reading from the N-terminus, the 632-residue chain is Probable extracellular metalloproteinase 2 (632 aa).

A signal peptide spans 1–19 (MHGLLLAGLAAALPLGVAG). The propeptide occupies 20–244 (LPARQQSGLS…VHNVVDYVAS (225 aa)). 2 N-linked (GlcNAc...) asparagine glycosylation sites follow: N81 and N270. Zn(2+) is bound at residue H429. E430 is an active-site residue. H433 lines the Zn(2+) pocket.

This sequence belongs to the peptidase M36 family. Requires Zn(2+) as cofactor.

It is found in the secreted. Functionally, secreted metalloproteinase probably acting as a virulence factor. The sequence is that of Probable extracellular metalloproteinase 2 (MEP2) from Arthroderma benhamiae (strain ATCC MYA-4681 / CBS 112371) (Trichophyton mentagrophytes).